Reading from the N-terminus, the 160-residue chain is Transcriptional repressor NrdR (160 aa).

Residues methionine 1–threonine 11 show a composition bias toward polar residues. The segment at methionine 1–glutamate 20 is disordered. A zinc finger spans residues cysteine 3–cysteine 34. An ATP-cone domain is found at leucine 49–aspartate 139.

The protein belongs to the NrdR family. Requires Zn(2+) as cofactor.

Negatively regulates transcription of bacterial ribonucleotide reductase nrd genes and operons by binding to NrdR-boxes. The chain is Transcriptional repressor NrdR from Rhodopseudomonas palustris (strain HaA2).